Reading from the N-terminus, the 210-residue chain is Large ribosomal subunit protein uL3 (210 aa).

Residues 123 to 144 are disordered; it reads KRHGQSRGPMAHGSRYHRRPGS.

Belongs to the universal ribosomal protein uL3 family. As to quaternary structure, part of the 50S ribosomal subunit. Forms a cluster with proteins L14 and L19.

Functionally, one of the primary rRNA binding proteins, it binds directly near the 3'-end of the 23S rRNA, where it nucleates assembly of the 50S subunit. This is Large ribosomal subunit protein uL3 from Alkaliphilus metalliredigens (strain QYMF).